Consider the following 723-residue polypeptide: Catalase-peroxidase (723 aa).

A cross-link (tryptophyl-tyrosyl-methioninium (Trp-Tyr) (with M-250)) is located at residues 96 to 224 (WHAAGSYRVA…LAAVMMGLIY (129 aa)). His97 functions as the Proton acceptor in the catalytic mechanism. The segment at residues 224 to 250 (YVNPEGVDGQPDPLKTAQDVRVTFARM) is a cross-link (tryptophyl-tyrosyl-methioninium (Tyr-Met) (with W-96)). Position 265 (His265) interacts with heme b.

The protein belongs to the peroxidase family. Peroxidase/catalase subfamily. In terms of assembly, homodimer or homotetramer. Requires heme b as cofactor. Post-translationally, formation of the three residue Trp-Tyr-Met cross-link is important for the catalase, but not the peroxidase activity of the enzyme.

It carries out the reaction H2O2 + AH2 = A + 2 H2O. The enzyme catalyses 2 H2O2 = O2 + 2 H2O. Its function is as follows. Bifunctional enzyme with both catalase and broad-spectrum peroxidase activity. The chain is Catalase-peroxidase from Leptothrix cholodnii (strain ATCC 51168 / LMG 8142 / SP-6) (Leptothrix discophora (strain SP-6)).